Reading from the N-terminus, the 207-residue chain is MANHQIKAQRRKDEGKGASRRLRHAGMIPAIIYGGDQRPVSIQLNHEQIWLAQQNEWFYSSILDLNVDGGGGEKVLLRDLQRHPYRQLVMHVDFQRVSSDAKLSVAVPLHFINQATSPAGKAGGVVITHELNEVQVSCLPKDLPEFIEVDLSTLNVGHVIHLSDITFPIGVELSTRLDKEHDMAVVIAKHAVIEDDAPAEEGEGDSK.

A disordered region spans residues 1–20 (MANHQIKAQRRKDEGKGASR).

This sequence belongs to the bacterial ribosomal protein bL25 family. CTC subfamily. As to quaternary structure, part of the 50S ribosomal subunit; part of the 5S rRNA/L5/L18/L25 subcomplex. Contacts the 5S rRNA. Binds to the 5S rRNA independently of L5 and L18.

This is one of the proteins that binds to the 5S RNA in the ribosome where it forms part of the central protuberance. The protein is Large ribosomal subunit protein bL25 of Xylella fastidiosa (strain M12).